The primary structure comprises 269 residues: 2-heptyl-3-hydroxy-4(1H)-quinolone dioxygenase (269 aa).

A substrate-binding site is contributed by H97. The active-site Proton donor/acceptor is the H246.

The protein belongs to the AB hydrolase superfamily. Monomer.

It catalyses the reaction 2-heptyl-3-hydroxy-4(1H)-quinolone + O2 = N-octanoylanthranilate + CO + H(+). Ring-cleaving dioxygenase involved in the degradation pathway of the Pseudomonas aeruginosa quorum sensing signal molecules HHQ (2-heptyl-4-quinolone) and PQS (2-heptyl-3-hydroxy-4(1H)-quinolone) to anthranilate. Catalyzes the cleavage of PQS to form N-octanoylanthranilate and carbon monoxide. Thus, leads to the inactivation of PQS that plays a central role in the regulation of virulence factor production by P.aeruginosa, thereby quenching the production of antimicrobials, which may contribute to the competitiveness of M.abscessus in presence of P.aeruginosa. In vitro, can also use other 2-alkyl-3-hydroxy-4(1H)-quinolone (AHQ) substrates with shorter alkyl substituents at C2, but with lower efficiency. This Mycobacteroides abscessus (strain ATCC 19977 / DSM 44196 / CCUG 20993 / CIP 104536 / JCM 13569 / NCTC 13031 / TMC 1543 / L948) (Mycobacterium abscessus) protein is 2-heptyl-3-hydroxy-4(1H)-quinolone dioxygenase.